Here is a 512-residue protein sequence, read N- to C-terminus: Cytochrome P450 monooxygenase hkm5 (512 aa).

A helical transmembrane segment spans residues 18–38; that stretch reads LIQLVRALLWVLVITIGGAIV. N-linked (GlcNAc...) asparagine glycosylation is found at N184, N263, N275, N374, and N419. C456 provides a ligand contact to heme.

This sequence belongs to the cytochrome P450 family. It depends on heme as a cofactor.

Its subcellular location is the membrane. It catalyses the reaction hancockiamide A + reduced [NADPH--hemoprotein reductase] + O2 = hancockiamide G + oxidized [NADPH--hemoprotein reductase] + 2 H2O + H(+). The enzyme catalyses hancockiamide B + reduced [NADPH--hemoprotein reductase] + O2 = hancockiamide C + oxidized [NADPH--hemoprotein reductase] + 2 H2O + H(+). It carries out the reaction hancockiamide D + reduced [NADPH--hemoprotein reductase] + O2 = hancockiamide H + oxidized [NADPH--hemoprotein reductase] + 2 H2O + H(+). It participates in secondary metabolite biosynthesis. Functionally, cytochrome P450 monooxygenase; part of the gene cluster that mediates the biosynthesis of hancockiamides, an unusual new family of N-cinnamoylated piperazines. The NRPS hkm10 and the NmrA-like reductase hkm9 are proposed to convert two molecules of L-Phe to the intermediary piperazine called xenocockiamide A. Xenocockiamide A is then converted to hancockiamide D via a series of hydroxylations and O-methylations. The tyrosinase hkm6 may catalyze an aromatic hydroxylation, then the 2-oxoglutarate-dependent Fe(II) dioxygenase hkm4 and the FAD-dependent phenol hydroxylase hkm7 may catalyze consecutive hydroxylations to install 2 more hydroxy groups, and the methyltransferase hkm8 probably catalyzes two methylations using 2 molecules of S-adenosyl-L-methionine (SAM). The NRPS hkm11 activates and transfers trans-cinnamate supplied by the PAL hkm12 to hancockiamide D and produces hancockiamide A. NRPS Hkm11 has the flexibility to tolerate the bulky hancockiamide G as a substrate and the absence of the acetyl-transferase hkm3 opens up the opportunity for hkm11 to introduce a second N-cinnamoyl moiety. The cytochrome P450 monooxygenase hkm5 catalyzes the methylenedioxy bridge formation, converting hancockiamide A into hancockiamide G. Hkm5 can also convert hancockiamide B into hancockiamide C, and hancockiamide D into hancockiamide H. The N-acetyltransferase hkm3 finally transfers an acetyl group to 1-N of piperazine, converting hancockiamide A into hancockiamide B and hancockiamide G into hancockiamide C. This chain is Cytochrome P450 monooxygenase hkm5, found in Aspergillus hancockii.